The primary structure comprises 415 residues: Mannosylglycerate hydrolase (415 aa).

Residues Tyr-23, 27–30 (WLWD), Tyr-76, Gln-98, and Gly-158 each bind substrate. Asp-160 serves as the catalytic Proton donor. Substrate-binding positions include Arg-193 and 344-345 (YW). Glu-388 acts as the Proton acceptor in catalysis.

Belongs to the glycosyl hydrolase 63 family. Homotetramer in solution.

The catalysed reaction is (2R)-2-O-(alpha-D-mannosyl)-glycerate + H2O = D-mannose + (R)-glycerate. The enzyme catalyses (2R)-2-O-(alpha-D-glucopyranosyl)-glycerate + H2O = (R)-glycerate + D-glucose. With respect to regulation, activity is not stimulated by divalent cations and not affected in the presence of EDTA. Functionally, hydrolase that catalyzes the hydrolysis of mannosylglycerate (MG), a solute produced in response to osmotic stress in thermophiles, into mannose and glycerate. Can also hydrolyze glucosylglycerate (GG) to glucose and glycerate, with similar catalytic efficiency. Is highly specific for MG and GG, and cannot use mannosylglyceramide (MGA), glucosylglycerol, mannosylglucosylglycerate (MGG), glucosylglucosylglycerate (GGG) or trehalose as substrates. The chain is Mannosylglycerate hydrolase from Thermus thermophilus (strain ATCC BAA-163 / DSM 7039 / HB27).